Consider the following 421-residue polypeptide: Vasopressin V1b receptor (421 aa).

The Extracellular portion of the chain corresponds to 1–35 (MDSEPSWTATPSPGGTLFVPNTTTPWLGRDEELAK). The N-linked (GlcNAc...) asparagine glycan is linked to Asn21. The helical transmembrane segment at 36–59 (VEIGILATVLVLATGGNLAVLLIL) threads the bilayer. The Cytoplasmic segment spans residues 60-71 (GLQGHKRSRMHL). The chain crosses the membrane as a helical span at residues 72–93 (FVLHLALTDLGVALFQVLPQLL). Residues 94–108 (WDITYRFQGSDLLCR) lie on the Extracellular side of the membrane. Cys107 and Cys186 are joined by a disulfide. A helical membrane pass occupies residues 109 to 130 (AVKYLQVLSMFASTYMLLAMTL). The Cytoplasmic portion of the chain corresponds to 131 to 151 (DRYLAVCHPLRSLQQPSQSTY). Residues 152–173 (PLIAAPWLLAAILSLPQVFIFS) form a helical membrane-spanning segment. Topologically, residues 174–202 (LREVIQGSGVLDCWADFYFSWGPRAYITW) are extracellular. A helical membrane pass occupies residues 203-223 (TTMAIFVLPVVVLTACYGLIC). Residues 224–280 (HEIYKNLKVKTQAGREERRGWPKSSSSAAAAATRGLPSRVSSISTISRAKIRTVKMT) lie on the Cytoplasmic side of the membrane. Residues 281–300 (FVIVLAYIACWAPFFSVQMW) form a helical membrane-spanning segment. Residues 301 to 318 (SVWDENAPNEDSTNVAFT) lie on the Extracellular side of the membrane. The helical transmembrane segment at 319–338 (ISMLLGNLSSCCNPWIYMGF) threads the bilayer. Topologically, residues 339 to 421 (NSHLLPRSLS…GEATMETSIS (83 aa)) are cytoplasmic. Residues 399-421 (KPAGSLKDLEQVDGEATMETSIS) form a disordered region.

The protein belongs to the G-protein coupled receptor 1 family. Vasopressin/oxytocin receptor subfamily.

The protein resides in the cell membrane. In terms of biological role, receptor for arginine vasopressin. The activity of this receptor is mediated by G proteins which activate a phosphatidyl-inositol-calcium second messenger system. The protein is Vasopressin V1b receptor (Avpr1b) of Mus musculus (Mouse).